We begin with the raw amino-acid sequence, 251 residues long: 1-(5-phosphoribosyl)-5-[(5-phosphoribosylamino)methylideneamino] imidazole-4-carboxamide isomerase (251 aa).

D8 functions as the Proton acceptor in the catalytic mechanism. D131 acts as the Proton donor in catalysis.

It belongs to the HisA/HisF family.

The protein resides in the cytoplasm. The enzyme catalyses 1-(5-phospho-beta-D-ribosyl)-5-[(5-phospho-beta-D-ribosylamino)methylideneamino]imidazole-4-carboxamide = 5-[(5-phospho-1-deoxy-D-ribulos-1-ylimino)methylamino]-1-(5-phospho-beta-D-ribosyl)imidazole-4-carboxamide. It participates in amino-acid biosynthesis; L-histidine biosynthesis; L-histidine from 5-phospho-alpha-D-ribose 1-diphosphate: step 4/9. This Burkholderia thailandensis (strain ATCC 700388 / DSM 13276 / CCUG 48851 / CIP 106301 / E264) protein is 1-(5-phosphoribosyl)-5-[(5-phosphoribosylamino)methylideneamino] imidazole-4-carboxamide isomerase.